The chain runs to 523 residues: Peptide chain release factor 3 (523 aa).

The tr-type G domain occupies 10 to 277 (EKRRTFAIIS…SFVDLAPAPE (268 aa)). Residues 19–26 (SHPDAGKT), 87–91 (DTPGH), and 141–144 (NKLD) contribute to the GTP site.

Belongs to the TRAFAC class translation factor GTPase superfamily. Classic translation factor GTPase family. PrfC subfamily.

The protein resides in the cytoplasm. Its function is as follows. Increases the formation of ribosomal termination complexes and stimulates activities of RF-1 and RF-2. It binds guanine nucleotides and has strong preference for UGA stop codons. It may interact directly with the ribosome. The stimulation of RF-1 and RF-2 is significantly reduced by GTP and GDP, but not by GMP. The chain is Peptide chain release factor 3 from Lactobacillus acidophilus (strain ATCC 700396 / NCK56 / N2 / NCFM).